We begin with the raw amino-acid sequence, 274 residues long: Large ribosomal subunit protein uL2 (274 aa).

2 disordered regions span residues 28–53 (KPYAPLLEKNSKSGGRNNNGRITTRH) and 221–274 (RGTA…RTKK). A compositionally biased stretch (low complexity) spans 39–48 (KSGGRNNNGR). The span at 253 to 274 (KGKKTRKNKRTEHFIVHRRTKK) shows a compositional bias: basic residues.

It belongs to the universal ribosomal protein uL2 family. In terms of assembly, part of the 50S ribosomal subunit. Forms a bridge to the 30S subunit in the 70S ribosome.

Functionally, one of the primary rRNA binding proteins. Required for association of the 30S and 50S subunits to form the 70S ribosome, for tRNA binding and peptide bond formation. It has been suggested to have peptidyltransferase activity; this is somewhat controversial. Makes several contacts with the 16S rRNA in the 70S ribosome. The chain is Large ribosomal subunit protein uL2 from Proteus mirabilis (strain HI4320).